We begin with the raw amino-acid sequence, 61 residues long: Large ribosomal subunit protein uL29 (61 aa).

This sequence belongs to the universal ribosomal protein uL29 family.

This is Large ribosomal subunit protein uL29 from Nitratidesulfovibrio vulgaris (strain ATCC 29579 / DSM 644 / CCUG 34227 / NCIMB 8303 / VKM B-1760 / Hildenborough) (Desulfovibrio vulgaris).